The chain runs to 438 residues: Adenosylhomocysteinase (438 aa).

Positions 64, 139, and 164 each coordinate substrate. 165-167 serves as a coordination point for NAD(+); that stretch reads TTT. The substrate site is built by lysine 194 and aspartate 198. Residues asparagine 199, 228 to 233, glutamate 251, asparagine 286, 307 to 309, and asparagine 352 each bind NAD(+); these read GYGDVG and IGH.

It belongs to the adenosylhomocysteinase family. NAD(+) is required as a cofactor.

The protein localises to the cytoplasm. It carries out the reaction S-adenosyl-L-homocysteine + H2O = L-homocysteine + adenosine. Its pathway is amino-acid biosynthesis; L-homocysteine biosynthesis; L-homocysteine from S-adenosyl-L-homocysteine: step 1/1. In terms of biological role, may play a key role in the regulation of the intracellular concentration of adenosylhomocysteine. The chain is Adenosylhomocysteinase from Coxiella burnetii (strain CbuK_Q154) (Coxiella burnetii (strain Q154)).